Consider the following 182-residue polypeptide: ATP synthase subunit delta (182 aa).

The protein belongs to the ATPase delta chain family. F-type ATPases have 2 components, F(1) - the catalytic core - and F(0) - the membrane proton channel. F(1) has five subunits: alpha(3), beta(3), gamma(1), delta(1), epsilon(1). CF(0) has four main subunits: a(1), b(1), b'(1) and c(10-14). The alpha and beta chains form an alternating ring which encloses part of the gamma chain. F(1) is attached to F(0) by a central stalk formed by the gamma and epsilon chains, while a peripheral stalk is formed by the delta, b and b' chains.

The protein resides in the cellular thylakoid membrane. Its function is as follows. F(1)F(0) ATP synthase produces ATP from ADP in the presence of a proton or sodium gradient. F-type ATPases consist of two structural domains, F(1) containing the extramembraneous catalytic core and F(0) containing the membrane proton channel, linked together by a central stalk and a peripheral stalk. During catalysis, ATP synthesis in the catalytic domain of F(1) is coupled via a rotary mechanism of the central stalk subunits to proton translocation. This protein is part of the stalk that links CF(0) to CF(1). It either transmits conformational changes from CF(0) to CF(1) or is implicated in proton conduction. The protein is ATP synthase subunit delta of Synechococcus sp. (strain CC9311).